The sequence spans 184 residues: Elongation factor P (184 aa).

This sequence belongs to the elongation factor P family.

The protein resides in the cytoplasm. Its pathway is protein biosynthesis; polypeptide chain elongation. Involved in peptide bond synthesis. Stimulates efficient translation and peptide-bond synthesis on native or reconstituted 70S ribosomes in vitro. Probably functions indirectly by altering the affinity of the ribosome for aminoacyl-tRNA, thus increasing their reactivity as acceptors for peptidyl transferase. This is Elongation factor P from Mycoplasma mycoides subsp. mycoides SC (strain CCUG 32753 / NCTC 10114 / PG1).